The following is a 119-amino-acid chain: Holo-[acyl-carrier-protein] synthase (119 aa).

Residues Asp5 and Glu51 each coordinate Mg(2+).

The protein belongs to the P-Pant transferase superfamily. AcpS family. Requires Mg(2+) as cofactor.

Its subcellular location is the cytoplasm. It catalyses the reaction apo-[ACP] + CoA = holo-[ACP] + adenosine 3',5'-bisphosphate + H(+). Its function is as follows. Transfers the 4'-phosphopantetheine moiety from coenzyme A to a Ser of acyl-carrier-protein. The chain is Holo-[acyl-carrier-protein] synthase from Helicobacter pylori (strain G27).